The sequence spans 154 residues: Cindoxin (154 aa).

Positions 3-145 constitute a Flavodoxin-like domain; the sequence is ALILYGTETG…TAEEWAREIL (143 aa). Residues 9–13 and 89–120 each bind FMN; these read TETGN and VFGLGDSYYTTFNQAGATAATILASLGGTQVG.

FMN is required as a cofactor.

Involved in the degradation of cineol (eucalyptol). The FMN protein, cindoxin, shuttles electrons between the FAD-containing cindoxin reductase (CinB) and 1,8-cineole 2-endo-monooxygenase (CinA). In Citrobacter braakii, this protein is Cindoxin (cinC).